Consider the following 446-residue polypeptide: Glycogen synthase (446 aa).

Arginine 15 is a binding site for ADP-alpha-D-glucose.

This sequence belongs to the glycosyltransferase 1 family. Bacterial/plant glycogen synthase subfamily.

It carries out the reaction [(1-&gt;4)-alpha-D-glucosyl](n) + ADP-alpha-D-glucose = [(1-&gt;4)-alpha-D-glucosyl](n+1) + ADP + H(+). Its pathway is glycan biosynthesis; glycogen biosynthesis. Its function is as follows. Synthesizes alpha-1,4-glucan chains using ADP-glucose. This chain is Glycogen synthase, found in Deinococcus deserti (strain DSM 17065 / CIP 109153 / LMG 22923 / VCD115).